Reading from the N-terminus, the 250-residue chain is Putative apoptosis inhibitor ORF99 (250 aa).

A BIR repeat occupies arginine 13–lysine 78.

Its function is as follows. May act as an apoptosis inhibitor. The chain is Putative apoptosis inhibitor ORF99 from Ostreid herpesvirus 1 (isolate France) (OsHV-1).